The following is a 283-amino-acid chain: MLIIETLPLLRQHIRRLRLEGKRIALVPTMGNLHDGHMKLVDEAQDRADVVVASIFVNPMQFDRPDDLARYPRTLQEDCEKLNKRKVDIIFTPSPDQIYPQGTEGQTYVEVPGLSTMLEGASRPGHFRGVSTIVSKLFNLVQPDIACFGEKDFQQLQLIRKMVADMGYDIEIVGVPIVRAKDGLALSSRNGYLTAEQRKIAPGLYKVMSELGEKLQAGERDLEEMIAIAGQELNEKGFRPDDIQIRDADTLFELTDASKRVVILMSAWLGQARLIDNKIIELS.

30-37 (MGNLHDGH) is an ATP binding site. Histidine 37 (proton donor) is an active-site residue. Glutamine 61 contacts (R)-pantoate. Glutamine 61 lines the beta-alanine pocket. 149–152 (GEKD) serves as a coordination point for ATP. Glutamine 155 contacts (R)-pantoate. Residues valine 178 and 186-189 (LSSR) contribute to the ATP site.

This sequence belongs to the pantothenate synthetase family. Homodimer.

The protein resides in the cytoplasm. The catalysed reaction is (R)-pantoate + beta-alanine + ATP = (R)-pantothenate + AMP + diphosphate + H(+). It functions in the pathway cofactor biosynthesis; (R)-pantothenate biosynthesis; (R)-pantothenate from (R)-pantoate and beta-alanine: step 1/1. Its function is as follows. Catalyzes the condensation of pantoate with beta-alanine in an ATP-dependent reaction via a pantoyl-adenylate intermediate. The polypeptide is Pantothenate synthetase (Salmonella arizonae (strain ATCC BAA-731 / CDC346-86 / RSK2980)).